A 243-amino-acid polypeptide reads, in one-letter code: MSGHSKWHNIQGRKNAQDAKRGKIFQKLSRELFMAARSGGPDPSSNAALRLIMDKARSANMPKDNIKRAIDKADGSDGANYDEITYEGYAPGGVAVLVHALTDNKNRTSSDVRVAFTRNGGTMGAAGSVAYMFDRRGYIAIAREGLDVDEDQMFEDILEAGADDLQTEEDVFEIYTDPKELANVRDILEKKYTLANAELTMIPQNTTPVDPEKVEQFQRLVDALEDNDDVQDVYTAGELPEEE.

The tract at residues 1 to 21 (MSGHSKWHNIQGRKNAQDAKR) is disordered.

The protein belongs to the TACO1 family.

Its subcellular location is the cytoplasm. The polypeptide is Probable transcriptional regulatory protein LCA_1307 (Latilactobacillus sakei subsp. sakei (strain 23K) (Lactobacillus sakei subsp. sakei)).